Reading from the N-terminus, the 437-residue chain is Ribosomal protein uS12 methylthiotransferase RimO (437 aa).

An MTTase N-terminal domain is found at 3–118 (KKFYITTLGC…AGKILREKFP (116 aa)). [4Fe-4S] cluster-binding residues include cysteine 12, cysteine 48, cysteine 81, cysteine 157, cysteine 161, and cysteine 164. The 228-residue stretch at 143–370 (NYSKPYAYVK…RDSHLEILEE (228 aa)) folds into the Radical SAM core domain. The TRAM domain occupies 373-437 (ESRIGRTYDA…YEYDMNGTWV (65 aa)).

This sequence belongs to the methylthiotransferase family. RimO subfamily. Requires [4Fe-4S] cluster as cofactor.

Its subcellular location is the cytoplasm. The enzyme catalyses L-aspartate(89)-[ribosomal protein uS12]-hydrogen + (sulfur carrier)-SH + AH2 + 2 S-adenosyl-L-methionine = 3-methylsulfanyl-L-aspartate(89)-[ribosomal protein uS12]-hydrogen + (sulfur carrier)-H + 5'-deoxyadenosine + L-methionine + A + S-adenosyl-L-homocysteine + 2 H(+). Catalyzes the methylthiolation of an aspartic acid residue of ribosomal protein uS12. This Leptospira interrogans serogroup Icterohaemorrhagiae serovar Lai (strain 56601) protein is Ribosomal protein uS12 methylthiotransferase RimO.